Reading from the N-terminus, the 251-residue chain is Probable transcriptional regulatory protein Caul_0780 (251 aa).

It belongs to the TACO1 family.

It is found in the cytoplasm. In Caulobacter sp. (strain K31), this protein is Probable transcriptional regulatory protein Caul_0780.